A 196-amino-acid polypeptide reads, in one-letter code: Pyroglutamyl-peptidase 1-like protein (196 aa).

Active-site residues include Glu-65, Cys-127, and His-146.

This sequence belongs to the peptidase C15 family.

This chain is Pyroglutamyl-peptidase 1-like protein (PGPEP1L), found in Homo sapiens (Human).